The sequence spans 339 residues: Ribosomal RNA large subunit methyltransferase F (339 aa).

The interval 1 to 26 (MTAPSTPKPQRKKPKTATTAKPVVPR) is disordered.

This sequence belongs to the methyltransferase superfamily. METTL16/RlmF family.

The protein localises to the cytoplasm. The catalysed reaction is adenosine(1618) in 23S rRNA + S-adenosyl-L-methionine = N(6)-methyladenosine(1618) in 23S rRNA + S-adenosyl-L-homocysteine + H(+). Functionally, specifically methylates the adenine in position 1618 of 23S rRNA. In Pseudomonas fluorescens (strain SBW25), this protein is Ribosomal RNA large subunit methyltransferase F.